A 35-amino-acid chain; its full sequence is Photosystem II reaction center protein T (35 aa).

Residues Ala3–Phe23 traverse the membrane as a helical segment.

This sequence belongs to the PsbT family. In terms of assembly, PSII is composed of 1 copy each of membrane proteins PsbA, PsbB, PsbC, PsbD, PsbE, PsbF, PsbH, PsbI, PsbJ, PsbK, PsbL, PsbM, PsbT, PsbY, PsbZ, Psb30/Ycf12, at least 3 peripheral proteins of the oxygen-evolving complex and a large number of cofactors. It forms dimeric complexes.

Its subcellular location is the plastid. The protein localises to the chloroplast thylakoid membrane. In terms of biological role, found at the monomer-monomer interface of the photosystem II (PS II) dimer, plays a role in assembly and dimerization of PSII. PSII is a light-driven water plastoquinone oxidoreductase, using light energy to abstract electrons from H(2)O, generating a proton gradient subsequently used for ATP formation. The sequence is that of Photosystem II reaction center protein T from Cunninghamia lanceolata (China fir).